Reading from the N-terminus, the 421-residue chain is MDLDSKMKKMGLGHEQGFGAPCLKCKEKCEGFELHFWRKICRNCKCGQEEHDVLLSNEEDRKVGRLFEDTKYTTLIAKLKTDGIPMYKRNVMILTNPVAAKKNVSINTVTYEWAPPVQNQALARQYMQMLPKEKQPVAGSEGAQYRKKQLAKQLPAHDQDPSKCHELSPKEVKEMEQFVKKYKSEALGVGDVKLPYEMGGPSPDKLYIPAGDRSTPAALGPMESKPAECKGTQYFCYCCKLSMKEGDPAIYAERAGYDKLWHPACFVCSTCSELLVDMIYFWKNGKLFCGRHYCDSEKPRCAGCDELIFSNEYTQAENQNWHLKHFCCFDCDNILAGEIYVMVNDKPVCKPCYVKNHAVVCQGCHNAIDPEVQRVTYNDFSWHASTQCFLCSCCSKCLIGQKFMPVEGMVFCSVECKKMMS.

A PET domain is found at 92-199 (MILTNPVAAK…GDVKLPYEMG (108 aa)). Residues 133-164 (EKQPVAGSEGAQYRKKQLAKQLPAHDQDPSKC) are disordered. The segment covering 155–164 (PAHDQDPSKC) has biased composition (basic and acidic residues). LIM zinc-binding domains lie at 234–297 (YFCY…CDSE), 299–359 (PRCA…NHAV), and 362–421 (QGCH…KMMS).

This sequence belongs to the prickle / espinas / testin family. As to quaternary structure, interacts via LIM domain 1 with ZYX. Interacts (via LIM domain 3) with ENAH and VASP. Interacts with ALKBH4, talin, actin, alpha-actinin, GRIP1 and PXN. Interacts (via LIM domain 2) with ACTL7A (via N-terminus). Heterodimer with ACTL7A; the heterodimer interacts with ENAH to form a heterotrimer.

The protein localises to the cytoplasm. The protein resides in the cell junction. Its subcellular location is the focal adhesion. Functionally, scaffold protein that may play a role in cell adhesion, cell spreading and in the reorganization of the actin cytoskeleton. Plays a role in the regulation of cell proliferation. May act as a tumor suppressor. In Oryctolagus cuniculus (Rabbit), this protein is Testin (TES).